The following is a 334-amino-acid chain: MSDVMTANRRSFLAEDGKETIVRTDDLVRDFDLGHRPEGGRLVLRAVDKVSLTIRRGETLGLVGESGSGKSTIGRMLVGLLPYTSGNIELFGQKIEPRAKAAAWKPLRRRVQFVFQDPHAALNPRMRVGTAIAEPLDVAGNLTRKERSARVDELMELVGLPTSFARRFPHEFSGGQRQRIVIARALALNPEILVCDEAVASLDVSMQAQIVNLLKDLQDQLGLSYLFIAHDLAVVRAVSHRVAVLYAGQIVETGPRTALYSDPLHPYSRALLDSVPRARRGAPRSIIAGEVPSLLNKPKGCAFCPRCPKAMDICRDVPPPLRVIGDREVACHLY.

The ABC transporter domain maps to 22–272 (VRTDDLVRDF…PLHPYSRALL (251 aa)). 64–71 (GESGSGKS) provides a ligand contact to ATP.

Belongs to the ABC transporter superfamily. In terms of assembly, the complex is composed of two ATP-binding proteins (BAB2_1052 and BAB2_1053), two transmembrane proteins (BAB2_1050 and BAB2_1051) and a solute-binding protein (BAB2_1049).

Its subcellular location is the cell inner membrane. In terms of biological role, probably part of an ABC transporter complex that could be involved in peptide import. Probably responsible for energy coupling to the transport system. This is Putative peptide import ATP-binding protein BAB2_1053 from Brucella abortus (strain 2308).